Here is a 277-residue protein sequence, read N- to C-terminus: MCVGARRLGRGPCAALLLLGLGLSTVTGLHCVGDTYPSNDRCCHECRPGNGMVSRCSRSQNTVCRPCGPGFYNDVVSSKPCKPCTWCNLRSGSERKQLCTATQDTVCRCRAGTQPLDSYKPGVDCAPCPPGHFSPGDNQACKPWTNCTLAGKHTLQPASNSSDAICEDRDPPATQPQETQGPPARPITVQPTEAWPRTSQGPSTRPVEVPGGRAVAAILGLGLVLGLLGPLAILLALYLLRRDQRLPPDAHKPPGGGSFRTPIQEEQADAHSTLAKI.

The N-terminal stretch at 1 to 28 is a signal peptide; sequence MCVGARRLGRGPCAALLLLGLGLSTVTG. Over 29–214 the chain is Extracellular; the sequence is LHCVGDTYPS…RPVEVPGGRA (186 aa). TNFR-Cys repeat units follow at residues 30 to 65 and 66 to 107; these read HCVG…TVCR and PCGP…DTVC. 8 cysteine pairs are disulfide-bonded: Cys-31–Cys-42, Cys-43–Cys-56, Cys-46–Cys-64, Cys-67–Cys-81, Cys-84–Cys-99, Cys-87–Cys-107, Cys-109–Cys-125, and Cys-128–Cys-141. One copy of the TNFR-Cys 3; truncated repeat lies at 108-126; sequence RCRAGTQPLDSYKPGVDCA. One copy of the TNFR-Cys 4 repeat lies at 127-167; sequence PCPPGHFSPGDNQACKPWTNCTLAGKHTLQPASNSSDAICE. Asn-146 and Asn-160 each carry an N-linked (GlcNAc...) asparagine glycan. Cys-147 and Cys-166 are disulfide-bonded. A disordered region spans residues 158–209; sequence ASNSSDAICEDRDPPATQPQETQGPPARPITVQPTEAWPRTSQGPSTRPVEV. A helical transmembrane segment spans residues 215–235; that stretch reads VAAILGLGLVLGLLGPLAILL. Residues 236–277 are Cytoplasmic-facing; it reads ALYLLRRDQRLPPDAHKPPGGGSFRTPIQEEQADAHSTLAKI. Positions 248–277 are disordered; it reads PDAHKPPGGGSFRTPIQEEQADAHSTLAKI.

In terms of assembly, interacts with TRAF2, TRAF3 and TRAF5. As to quaternary structure, (Microbial infection) Interacts with Human herpesvirus 6B/HHV-6B gQ1:gQ2 proteins.

It localises to the membrane. In terms of biological role, receptor for TNFSF4/OX40L/GP34. Is a costimulatory molecule implicated in long-term T-cell immunity. (Microbial infection) Acts as a receptor for human herpesvirus 6B/HHV-6B. The chain is Tumor necrosis factor receptor superfamily member 4 (TNFRSF4) from Homo sapiens (Human).